Here is a 120-residue protein sequence, read N- to C-terminus: Prophage bactoprenol-linked glucose translocase homolog (120 aa).

The Cytoplasmic portion of the chain corresponds to 1–9; that stretch reads MLKLFAKYT. Residues 10–30 traverse the membrane as a helical segment; sequence SIGVLNTLIHWVVFGVCIYVA. Topologically, residues 31–33 are periplasmic; the sequence is HTN. A helical membrane pass occupies residues 34–54; the sequence is QALANFAGFVVAVSFSFFANA. The Cytoplasmic segment spans residues 55–64; it reads KFTFKASTTT. A helical membrane pass occupies residues 65–85; that stretch reads MRYMLYVGFMGTLSATVGWAA. The Periplasmic segment spans residues 86-88; the sequence is DRC. Residues 89–109 traverse the membrane as a helical segment; sequence ALPPMITLVTFSAISLVCGFV. Residues 110 to 120 lie on the Cytoplasmic side of the membrane; the sequence is YSKFIVFRDAK.

Belongs to the GtrA family.

It localises to the cell inner membrane. In terms of biological role, involved in O antigen modification. Involved in the translocation of bactoprenol-linked glucose across the cytoplasmic membrane. The sequence is that of Prophage bactoprenol-linked glucose translocase homolog (yfdG) from Escherichia coli (strain K12).